The sequence spans 117 residues: Large ribosomal subunit protein uL18 (117 aa).

It belongs to the universal ribosomal protein uL18 family. Part of the 50S ribosomal subunit; part of the 5S rRNA/L5/L18/L25 subcomplex. Contacts the 5S and 23S rRNAs.

This is one of the proteins that bind and probably mediate the attachment of the 5S RNA into the large ribosomal subunit, where it forms part of the central protuberance. In Neisseria gonorrhoeae (strain ATCC 700825 / FA 1090), this protein is Large ribosomal subunit protein uL18.